The chain runs to 253 residues: Mediator of RNA polymerase II transcription subunit 10 (253 aa).

Disordered regions lie at residues 32-63, 88-109, and 206-253; these read YDTN…HASS, LPSS…TELE, and VEAT…QSGQ. Positions 34 to 47 are enriched in low complexity; sequence TNPSSSNNNTPTSS. Residues 50–60 are compositionally biased toward gly residues; that stretch reads SGGGGGGGGGH. A compositionally biased stretch (low complexity) spans 88–104; it reads LPSSPSSGPSNNQPQQG. The span at 231 to 253 shows a compositional bias: gly residues; it reads SAGGEGQQGQGQGQQGQGQQSGQ.

It belongs to the Mediator complex subunit 10 family. Component of the Mediator complex.

The protein localises to the nucleus. Its function is as follows. Component of the Mediator complex, a coactivator involved in the regulated transcription of nearly all RNA polymerase II-dependent genes. Mediator functions as a bridge to convey information from gene-specific regulatory proteins to the basal RNA polymerase II transcription machinery. Mediator is recruited to promoters by direct interactions with regulatory proteins and serves as a scaffold for the assembly of a functional preinitiation complex with RNA polymerase II and the general transcription factors. In Neurospora crassa (strain ATCC 24698 / 74-OR23-1A / CBS 708.71 / DSM 1257 / FGSC 987), this protein is Mediator of RNA polymerase II transcription subunit 10 (nut2).